The following is a 99-amino-acid chain: PE family protein PE13 (99 aa).

The 93-residue stretch at 1-93 folds into the PE domain; the sequence is MSFVMAYPEM…ASSYAATEVA (93 aa).

This sequence belongs to the mycobacterial PE family.

The protein localises to the secreted. The protein resides in the cell wall. Its function is as follows. May play a pivotal role in the interaction between M.tuberculosis and host. Can enhance the survival within macrophages under stress conditions such as H(2)O(2), SDS and low pH. Increases the production of IL-6 and IL-1beta from macrophages, and decreases the secretion of suppressor of cytokine signaling 3 (SOCS-3). These changes probably involve the p38-ERK-NF-kappa-B signaling pathway. Also precipitates the macrophage death. This Mycobacterium tuberculosis (strain ATCC 25618 / H37Rv) protein is PE family protein PE13.